Here is a 232-residue protein sequence, read N- to C-terminus: Protein Mis18-alpha (232 aa).

Residues Ser36, Ser39, and Ser40 each carry the phosphoserine modification. The Mis18 domain occupies 79-177; sequence PLVFLCSGCR…SVEAIESYVL (99 aa). Zn(2+)-binding residues include Cys84, Cys87, Cys140, and Cys143. A Glycyl lysine isopeptide (Lys-Gly) (interchain with G-Cter in SUMO2) cross-link involves residue Lys161. Ser232 carries the phosphoserine modification.

The protein belongs to the mis18 family. Homodimer, and heterodimer with OIP5/MIS18B. Identified in a complex containing MIS18A, OIP5/MIS18B, MIS18BP1, RBBP7 and RBBP4.

It is found in the nucleus. The protein localises to the chromosome. The protein resides in the centromere. In terms of biological role, required for recruitment of CENPA to centromeres and normal chromosome segregation during mitosis. The sequence is that of Protein Mis18-alpha (MIS18A) from Pan troglodytes (Chimpanzee).